The following is a 625-amino-acid chain: DNA-directed RNA polymerase subunit gamma (625 aa).

Residues Cys-71, Cys-73, Cys-86, and Cys-89 each contribute to the Zn(2+) site. Residues Asp-467, Asp-469, and Asp-471 each coordinate Mg(2+).

This sequence belongs to the RNA polymerase beta' chain family. RpoC1 subfamily. In terms of assembly, in cyanobacteria the RNAP catalytic core is composed of 2 alpha, 1 beta, 1 beta', 1 gamma and 1 omega subunit. When a sigma factor is associated with the core the holoenzyme is formed, which can initiate transcription. Mg(2+) serves as cofactor. The cofactor is Zn(2+).

It catalyses the reaction RNA(n) + a ribonucleoside 5'-triphosphate = RNA(n+1) + diphosphate. Functionally, DNA-dependent RNA polymerase catalyzes the transcription of DNA into RNA using the four ribonucleoside triphosphates as substrates. The polypeptide is DNA-directed RNA polymerase subunit gamma (Gloeothece citriformis (strain PCC 7424) (Cyanothece sp. (strain PCC 7424))).